We begin with the raw amino-acid sequence, 560 residues long: Diphtheria toxin (560 aa).

A signal peptide spans 1 to 25 (MSRKLFASILIGALLGIGAPPSAHA). The NAD(+) site is built by His-46 and Tyr-90. The active site involves Glu-173. 2 disulfide bridges follow: Cys-211-Cys-226 and Cys-486-Cys-496.

As to quaternary structure, homodimer.

The catalysed reaction is diphthamide-[translation elongation factor 2] + NAD(+) = N-(ADP-D-ribosyl)diphthamide-[translation elongation factor 2] + nicotinamide + H(+). Functionally, diphtheria toxin, produced by a phage infecting Corynebacterium diphtheriae, is a proenzyme that, after activation, catalyzes the covalent attachment of the ADP ribose moiety of NAD to elongation factor 2. Fragment A is responsible for enzymatic ADP-ribosylation of elongation factor 2, while fragment B is responsible for binding of toxin to cell receptors and entry of fragment A. The sequence is that of Diphtheria toxin from Corynephage omega.